The following is a 181-amino-acid chain: Peptide methionine sulfoxide reductase MsrA (181 aa).

Residue cysteine 14 is part of the active site.

This sequence belongs to the MsrA Met sulfoxide reductase family.

The enzyme catalyses L-methionyl-[protein] + [thioredoxin]-disulfide + H2O = L-methionyl-(S)-S-oxide-[protein] + [thioredoxin]-dithiol. It catalyses the reaction [thioredoxin]-disulfide + L-methionine + H2O = L-methionine (S)-S-oxide + [thioredoxin]-dithiol. Has an important function as a repair enzyme for proteins that have been inactivated by oxidation. Catalyzes the reversible oxidation-reduction of methionine sulfoxide in proteins to methionine. The polypeptide is Peptide methionine sulfoxide reductase MsrA (Bacillus licheniformis (strain ATCC 14580 / DSM 13 / JCM 2505 / CCUG 7422 / NBRC 12200 / NCIMB 9375 / NCTC 10341 / NRRL NRS-1264 / Gibson 46)).